The primary structure comprises 1199 residues: Putative pyruvate-flavodoxin oxidoreductase (1199 aa).

4Fe-4S ferredoxin-type domains lie at 681-710 (EIPVWDPDVCVQCGKCVIVCPHAVIRGKVY) and 737-766 (FTIQVAPEDCTGCGICVDVCPAKNKSQPRL). [4Fe-4S] cluster is bound by residues cysteine 690, cysteine 693, cysteine 696, cysteine 700, cysteine 746, cysteine 749, cysteine 752, cysteine 756, cysteine 820, cysteine 823, cysteine 848, and cysteine 1079.

This sequence belongs to the pyruvate:ferredoxin/flavodoxin oxidoreductase family. Requires [4Fe-4S] cluster as cofactor.

The catalysed reaction is oxidized [flavodoxin] + pyruvate + CoA + 2 H(+) = reduced [flavodoxin] + acetyl-CoA + CO2. Its function is as follows. Oxidoreductase required for the transfer of electrons from pyruvate to flavodoxin. The polypeptide is Putative pyruvate-flavodoxin oxidoreductase (nifJ) (Synechocystis sp. (strain ATCC 27184 / PCC 6803 / Kazusa)).